The following is a 415-amino-acid chain: Coenzyme F420 hydrogenase subunit alpha (415 aa).

Positions 68, 71, 391, and 394 each coordinate Ni(2+).

Belongs to the [NiFe]/[NiFeSe] hydrogenase large subunit family. Heterocomplex of the form (alpha(1)beta(1)gamma(1))(8). Ni(2+) serves as cofactor. Requires iron-sulfur cluster as cofactor. The cofactor is FAD.

It catalyses the reaction oxidized coenzyme F420-(gamma-L-Glu)(n) + H2 + H(+) = reduced coenzyme F420-(gamma-L-Glu)(n). Reduces the physiological low-potential two-electron acceptor coenzyme F420, and the artificial one-electron acceptor methylviologen. The polypeptide is Coenzyme F420 hydrogenase subunit alpha (frhA) (Methanocaldococcus jannaschii (strain ATCC 43067 / DSM 2661 / JAL-1 / JCM 10045 / NBRC 100440) (Methanococcus jannaschii)).